We begin with the raw amino-acid sequence, 181 residues long: Crossover junction endodeoxyribonuclease RuvC (181 aa).

Active-site residues include aspartate 7, glutamate 67, and aspartate 139. Mg(2+)-binding residues include aspartate 7, glutamate 67, and aspartate 139.

This sequence belongs to the RuvC family. Homodimer which binds Holliday junction (HJ) DNA. The HJ becomes 2-fold symmetrical on binding to RuvC with unstacked arms; it has a different conformation from HJ DNA in complex with RuvA. In the full resolvosome a probable DNA-RuvA(4)-RuvB(12)-RuvC(2) complex forms which resolves the HJ. Mg(2+) is required as a cofactor.

The protein localises to the cytoplasm. The enzyme catalyses Endonucleolytic cleavage at a junction such as a reciprocal single-stranded crossover between two homologous DNA duplexes (Holliday junction).. The RuvA-RuvB-RuvC complex processes Holliday junction (HJ) DNA during genetic recombination and DNA repair. Endonuclease that resolves HJ intermediates. Cleaves cruciform DNA by making single-stranded nicks across the HJ at symmetrical positions within the homologous arms, yielding a 5'-phosphate and a 3'-hydroxyl group; requires a central core of homology in the junction. The consensus cleavage sequence is 5'-(A/T)TT(C/G)-3'. Cleavage occurs on the 3'-side of the TT dinucleotide at the point of strand exchange. HJ branch migration catalyzed by RuvA-RuvB allows RuvC to scan DNA until it finds its consensus sequence, where it cleaves and resolves the cruciform DNA. The sequence is that of Crossover junction endodeoxyribonuclease RuvC from Bordetella avium (strain 197N).